The sequence spans 650 residues: Chaperone protein DnaK (650 aa).

Threonine 200 carries the phosphothreonine; by autocatalysis modification. Residues 611–636 (AQQAGAAGAAGAAAEGASAQGGAQPA) show a composition bias toward low complexity. The disordered stretch occupies residues 611–650 (AQQAGAAGAAGAAAEGASAQGGAQPADDVVDADFKEVKKD).

The protein belongs to the heat shock protein 70 family.

Its function is as follows. Acts as a chaperone. This chain is Chaperone protein DnaK, found in Burkholderia mallei (strain NCTC 10247).